Here is a 414-residue protein sequence, read N- to C-terminus: 2-epi-5-epi-valiolone synthase (414 aa).

Residues D70, 101–104 (ESAK), 134–138 (GVLTD), 158–159 (TT), K171, K180, and 198–201 (FLAT) each bind NAD(+). K171 is an active-site residue. 3 residues coordinate Zn(2+): E213, H284, and H300.

Belongs to the sugar phosphate cyclases superfamily. EEVS family. The cofactor is NAD(+). Requires Zn(2+) as cofactor.

The catalysed reaction is D-sedoheptulose 7-phosphate = 2-epi-5-epi-valiolone + phosphate. Its pathway is antibiotic biosynthesis. Its function is as follows. Catalyzes the cyclization of D-sedoheptulose 7-phosphate to 2-epi-5-epi-valiolone. Involved in validamycin biosynthesis. This Streptomyces hygroscopicus subsp. jinggangensis (strain 5008) protein is 2-epi-5-epi-valiolone synthase.